The primary structure comprises 944 residues: UvrABC system protein A (944 aa).

33–40 lines the ATP pocket; sequence GLSGSGKS. The C4-type zinc-finger motif lies at 252 to 279; the sequence is CPICGFSIGELEPRMFSFNSPFGACPTC. 2 consecutive ABC transporter domains span residues 309-587 and 607-935; these read WEPT…KKSL and ITDR…QYLK. Position 639-646 (639-646) interacts with ATP; that stretch reads GVSGSGKS. The C4-type zinc finger occupies 738–764; it reads CEACKGDGIIKIEMHFLPDVYVPCEVC.

Belongs to the ABC transporter superfamily. UvrA family. As to quaternary structure, forms a heterotetramer with UvrB during the search for lesions.

Its subcellular location is the cytoplasm. In terms of biological role, the UvrABC repair system catalyzes the recognition and processing of DNA lesions. UvrA is an ATPase and a DNA-binding protein. A damage recognition complex composed of 2 UvrA and 2 UvrB subunits scans DNA for abnormalities. When the presence of a lesion has been verified by UvrB, the UvrA molecules dissociate. In Staphylococcus epidermidis (strain ATCC 12228 / FDA PCI 1200), this protein is UvrABC system protein A.